The following is a 102-amino-acid chain: Small ribosomal subunit protein uS10 (102 aa).

Belongs to the universal ribosomal protein uS10 family. Part of the 30S ribosomal subunit.

Its function is as follows. Involved in the binding of tRNA to the ribosomes. This chain is Small ribosomal subunit protein uS10, found in Mesoplasma florum (strain ATCC 33453 / NBRC 100688 / NCTC 11704 / L1) (Acholeplasma florum).